We begin with the raw amino-acid sequence, 84 residues long: NADH-ubiquinone oxidoreductase chain 4L (84 aa).

The next 2 membrane-spanning stretches (helical) occupy residues 19-39 (ITLL…LIHI) and 50-70 (IFSL…LSIL).

Belongs to the complex I subunit 4L family.

The protein resides in the mitochondrion membrane. The enzyme catalyses a ubiquinone + NADH + 5 H(+)(in) = a ubiquinol + NAD(+) + 4 H(+)(out). Functionally, core subunit of the mitochondrial membrane respiratory chain NADH dehydrogenase (Complex I) that is believed to belong to the minimal assembly required for catalysis. Complex I functions in the transfer of electrons from NADH to the respiratory chain. The immediate electron acceptor for the enzyme is believed to be ubiquinone. This Candida albicans (strain SC5314 / ATCC MYA-2876) (Yeast) protein is NADH-ubiquinone oxidoreductase chain 4L (NAD4L).